The following is a 225-amino-acid chain: Chromosome partition protein MukE (225 aa).

A disordered region spans residues 197–225 (RDGEAMPIENHLQLNDETEESQPDSGEEE). Residues 212–225 (DETEESQPDSGEEE) are compositionally biased toward acidic residues.

This sequence belongs to the MukE family. As to quaternary structure, interacts, and probably forms a ternary complex, with MukF and MukB. The complex formation is stimulated by calcium or magnesium.

It localises to the cytoplasm. Its subcellular location is the nucleoid. Functionally, involved in chromosome condensation, segregation and cell cycle progression. May participate in facilitating chromosome segregation by condensation DNA from both sides of a centrally located replisome during cell division. Probably acts via its interaction with MukB and MukF. In Salmonella typhi, this protein is Chromosome partition protein MukE.